A 152-amino-acid polypeptide reads, in one-letter code: Transcriptional regulator MraZ (152 aa).

SpoVT-AbrB domains are found at residues 5–52 and 81–124; these read TSAI…PLPE and ASDC…HDTA.

It belongs to the MraZ family. As to quaternary structure, forms oligomers.

The protein localises to the cytoplasm. Its subcellular location is the nucleoid. In Colwellia psychrerythraea (strain 34H / ATCC BAA-681) (Vibrio psychroerythus), this protein is Transcriptional regulator MraZ.